The following is a 515-amino-acid chain: MATTLNPSEISELIKNRIEKVKLAAESRNEGTVTSVSDGIVRIFGLADVMQGEMIELPNNTFALALNLERDSVGAVVLGDYEHLREGDVAKTTGRILEVPVGPELLGRVVNALGEPIDGKGPLGTDLTAPVERVAPGVIWRKSVDQPVQTGYKSVDSMIPIGRGQRELIIGDRQTGKTAMAIDAVINQKGTGIKCVYVAIGQKASTIANIVRKLEENGALAHTIVVAATASESAAMQYISAYSGCTMGEYFMDRGEDALIVYDDLSKQAVAYRQISLLLKRPPGREAYPGDVFYLHSRLLERAARVSEEYVEKFTEGKVTGKTGSLTALPIIETQAGDVSAFVPTNVISITDGQIFLETDLFNAGIRPAVNAGISVSRVGGSAQTKIIKKLSGGIRISLAQYRELAAFAQFASDLDEATRKQLERGQRVTELMKQKQYAPMSIANQALSIYAVNEGYLDDVPVNKLLAFEEGLHAHFANTQGELVSKVNATGGWDNDIEGAFKKGIAEFKTTGSW.

171–178 is an ATP binding site; that stretch reads GDRQTGKT.

The protein belongs to the ATPase alpha/beta chains family. In terms of assembly, F-type ATPases have 2 components, CF(1) - the catalytic core - and CF(0) - the membrane proton channel. CF(1) has five subunits: alpha(3), beta(3), gamma(1), delta(1), epsilon(1). CF(0) has three main subunits: a(1), b(2) and c(9-12). The alpha and beta chains form an alternating ring which encloses part of the gamma chain. CF(1) is attached to CF(0) by a central stalk formed by the gamma and epsilon chains, while a peripheral stalk is formed by the delta and b chains.

It localises to the cell membrane. The enzyme catalyses ATP + H2O + 4 H(+)(in) = ADP + phosphate + 5 H(+)(out). In terms of biological role, produces ATP from ADP in the presence of a proton gradient across the membrane. The alpha chain is a regulatory subunit. This chain is ATP synthase subunit alpha, found in Stenotrophomonas maltophilia (strain K279a).